The following is a 267-amino-acid chain: NAD-capped RNA hydrolase NudC (267 aa).

Arg-70 contacts substrate. The Zn(2+) site is built by Cys-99 and Cys-102. Glu-112 is a binding site for substrate. Zn(2+) is bound by residues Cys-117 and Cys-122. Tyr-127 serves as a coordination point for substrate. A Nudix hydrolase domain is found at 128-257; that stretch reads PVICPSIIVA…TIARALIEAT (130 aa). 3 residues coordinate a divalent metal cation: Ala-166, Glu-182, and Glu-186. A Nudix box motif is present at residues 167–188; that stretch reads GFVEVGESFEQTIHREVFEETG. 200 to 207 contacts substrate; the sequence is QPWAFPNS. Glu-227 serves as a coordination point for a divalent metal cation. Ala-250 is a substrate binding site.

The protein belongs to the Nudix hydrolase family. NudC subfamily. As to quaternary structure, homodimer. Mg(2+) serves as cofactor. Requires Mn(2+) as cofactor. The cofactor is Zn(2+).

It catalyses the reaction a 5'-end NAD(+)-phospho-ribonucleoside in mRNA + H2O = a 5'-end phospho-adenosine-phospho-ribonucleoside in mRNA + beta-nicotinamide D-ribonucleotide + 2 H(+). The enzyme catalyses NAD(+) + H2O = beta-nicotinamide D-ribonucleotide + AMP + 2 H(+). It carries out the reaction NADH + H2O = reduced beta-nicotinamide D-ribonucleotide + AMP + 2 H(+). In terms of biological role, mRNA decapping enzyme that specifically removes the nicotinamide adenine dinucleotide (NAD) cap from a subset of mRNAs by hydrolyzing the diphosphate linkage to produce nicotinamide mononucleotide (NMN) and 5' monophosphate mRNA. The NAD-cap is present at the 5'-end of some mRNAs and stabilizes RNA against 5'-processing. Has preference for mRNAs with a 5'-end purine. Catalyzes the hydrolysis of a broad range of dinucleotide pyrophosphates. The polypeptide is NAD-capped RNA hydrolase NudC (Mannheimia succiniciproducens (strain KCTC 0769BP / MBEL55E)).